The sequence spans 211 residues: Ribosomal RNA small subunit methyltransferase G (211 aa).

S-adenosyl-L-methionine is bound by residues glycine 74, leucine 79, alanine 125–glutamate 126, and arginine 140.

Belongs to the methyltransferase superfamily. RNA methyltransferase RsmG family.

Its subcellular location is the cytoplasm. Its function is as follows. Specifically methylates the N7 position of guanine in position 518 of 16S rRNA. The polypeptide is Ribosomal RNA small subunit methyltransferase G (Clavibacter michiganensis subsp. michiganensis (strain NCPPB 382)).